A 416-amino-acid chain; its full sequence is Enterobactin exporter EntS (416 aa).

Residues 1 to 21 (MNRQSWLLNLSLLKTHPAFRA) are Cytoplasmic-facing. The chain crosses the membrane as a helical span at residues 22 to 42 (VFLARFISIVSLGLLGVAVPV). Topologically, residues 43–55 (QIQMMTHSTWQVG) are periplasmic. Residues 56–76 (LSVTLTGSAMFVGLMVGGVLA) traverse the membrane as a helical segment. At 77 to 83 (DRYERKK) the chain is on the cytoplasmic side. Residues 84–104 (VILLARGTCGIGFIGLCLNAL) form a helical membrane-spanning segment. The Periplasmic portion of the chain corresponds to 105-109 (LPEPS). The helical transmembrane segment at 110–130 (LLAIYLLGLWDGFFASLGVTA) threads the bilayer. Topologically, residues 131–156 (LLAATPALVGRENLMQAGAITMLTVR) are cytoplasmic. The chain crosses the membrane as a helical span at residues 157–177 (LGSVISPMLGGVLLATGGVAW). N178 is a topological domain (periplasmic). The chain crosses the membrane as a helical span at residues 179–199 (YGLAAAGTFITLLPLLSLPAL). Over 200–218 (PPPPQPREHPLKSLLAAFR) the chain is Cytoplasmic. The chain crosses the membrane as a helical span at residues 219–239 (FLLSSPLIGGIALLGGLLTMA). Topologically, residues 240-256 (SAVRVLYPALAINWHMS) are periplasmic. Residues 257-277 (AAQIGLLYAAIPLGAAVGALT) traverse the membrane as a helical segment. Over 278–287 (SGQLAHSVRP) the chain is Cytoplasmic. Residues 288-307 (GLLMLVSTVGSFLAIGVFGL) traverse the membrane as a helical segment. At 308–313 (MPVWLL) the chain is on the periplasmic side. A helical membrane pass occupies residues 314–336 (GVICLALFGWLSAISSLLQYTLL). Over 337-356 (QTQTPEAMLGRINGLWTAQN) the chain is Cytoplasmic. Residues 357–377 (VTGDAIGAALLGGLGAMMTPV) traverse the membrane as a helical segment. A topological domain (periplasmic) is located at residue A378. A helical membrane pass occupies residues 379–399 (SASVSGFGLVIVGLLLMLLLG). Residues 400–416 (ELRRFRQPPPVPDGAPL) are Cytoplasmic-facing.

The protein belongs to the major facilitator superfamily. EntS (TC 2.A.1.38) family.

Its subcellular location is the cell inner membrane. In terms of biological role, component of an export pathway for enterobactin. The chain is Enterobactin exporter EntS from Citrobacter koseri (strain ATCC BAA-895 / CDC 4225-83 / SGSC4696).